A 493-amino-acid chain; its full sequence is BICD family-like cargo adapter 2 (493 aa).

2 coiled-coil regions span residues 56–275 (ELGK…ELHM) and 365–431 (MQHV…LLST).

Belongs to the BICDR family.

This is BICD family-like cargo adapter 2 (bicdl2) from Xenopus laevis (African clawed frog).